Consider the following 1057-residue polypeptide: Carbamoyl phosphate synthase large chain (1057 aa).

Positions 1–401 are carboxyphosphate synthetic domain; it reads MPKNKDINTI…SLLKAIRSLE (401 aa). Positions 129, 169, 175, 176, 208, 210, 215, 241, 242, 243, 284, and 298 each coordinate ATP. Positions 133–327 constitute an ATP-grasp 1 domain; it reads RSLMNELDVP…IAKLAAKIAV (195 aa). Mg(2+)-binding residues include Gln-284, Glu-298, and Asn-300. Mn(2+) contacts are provided by Gln-284, Glu-298, and Asn-300. The interval 402-546 is oligomerization domain; sequence YGVHHLGLPN…YGTYERDNES (145 aa). The tract at residues 547-929 is carbamoyl phosphate synthetic domain; sequence VVTDKEKVIV…ALFKGLTASG (383 aa). Positions 671–861 constitute an ATP-grasp 2 domain; it reads EALLNKIDVP…MAQLAMRAIL (191 aa). ATP-binding residues include Arg-707, Arg-746, Leu-748, Glu-752, Gly-777, Val-778, His-779, Ser-780, Gln-820, and Glu-832. Mg(2+) is bound by residues Gln-820, Glu-832, and Asn-834. Residues Gln-820, Glu-832, and Asn-834 each coordinate Mn(2+). Positions 930–1057 constitute an MGS-like domain; it reads VEVKDHGTVL…ESMSFTMKQM (128 aa). Positions 930-1057 are allosteric domain; the sequence is VEVKDHGTVL…ESMSFTMKQM (128 aa).

The protein belongs to the CarB family. In terms of assembly, composed of two chains; the small (or glutamine) chain promotes the hydrolysis of glutamine to ammonia, which is used by the large (or ammonia) chain to synthesize carbamoyl phosphate. Tetramer of heterodimers (alpha,beta)4. The cofactor is Mg(2+). Mn(2+) serves as cofactor.

The catalysed reaction is hydrogencarbonate + L-glutamine + 2 ATP + H2O = carbamoyl phosphate + L-glutamate + 2 ADP + phosphate + 2 H(+). The enzyme catalyses hydrogencarbonate + NH4(+) + 2 ATP = carbamoyl phosphate + 2 ADP + phosphate + 2 H(+). It participates in amino-acid biosynthesis; L-arginine biosynthesis; carbamoyl phosphate from bicarbonate: step 1/1. Its pathway is pyrimidine metabolism; UMP biosynthesis via de novo pathway; (S)-dihydroorotate from bicarbonate: step 1/3. Its function is as follows. Large subunit of the glutamine-dependent carbamoyl phosphate synthetase (CPSase). CPSase catalyzes the formation of carbamoyl phosphate from the ammonia moiety of glutamine, carbonate, and phosphate donated by ATP, constituting the first step of 2 biosynthetic pathways, one leading to arginine and/or urea and the other to pyrimidine nucleotides. The large subunit (synthetase) binds the substrates ammonia (free or transferred from glutamine from the small subunit), hydrogencarbonate and ATP and carries out an ATP-coupled ligase reaction, activating hydrogencarbonate by forming carboxy phosphate which reacts with ammonia to form carbamoyl phosphate. This chain is Carbamoyl phosphate synthase large chain, found in Staphylococcus carnosus (strain TM300).